The following is a 267-amino-acid chain: MHLLLFQLLVLLPLGKTTRHQDGRQNQSSLSPVLLPRNQRELPTGNHEEAEEKPDLFVAVPHLVATSPAGEGQRQREKMLSRFGRFWKKPEREMHPSRDSDSEPFPPGTQSLIQPIDGMKMEKSPLREEAKKFWHHFMFRKTPASQGVILPIKSHEVHWETCRTVPFSQTITHEGCEKVVVQNNLCFGKCGSVHFPGAAQHSHTSCSHCLPAKFTTMHLPLNCTELSSVIKVVMLVEECQCKVKTEHEDGHILHAGSQDSFIPGVSA.

A signal peptide spans 1–17 (MHLLLFQLLVLLPLGKT). 2 disordered regions span residues 19 to 52 (RHQDGRQNQSSLSPVLLPRNQRELPTGNHEEAEE) and 87 to 113 (WKKPEREMHPSRDSDSEPFPPGTQSLI). A glycan (N-linked (GlcNAc...) asparagine) is linked at Asn26. Positions 88–101 (KKPEREMHPSRDSD) are enriched in basic and acidic residues. 4 disulfides stabilise this stretch: Cys162/Cys209, Cys176/Cys223, Cys186/Cys239, and Cys190/Cys241. The region spanning 162–246 (CRTVPFSQTI…EECQCKVKTE (85 aa)) is the CTCK domain. Asn222 carries an N-linked (GlcNAc...) asparagine glycan.

The protein belongs to the DAN family. Forms monomers and predominantly dimers. N-glycosylated.

Its subcellular location is the secreted. Its function is as follows. Cytokine that may play a role in anterior neural induction and somite formation during embryogenesis in part through a BMP-inhibitory mechanism. Can regulate Nodal signaling during gastrulation as well as the formation and patterning of the primitive streak. This chain is Cerberus (CER1), found in Homo sapiens (Human).